A 336-amino-acid polypeptide reads, in one-letter code: Large ribosomal subunit protein uL1 (336 aa).

The segment at 1-245 is large ribosomal subunit protein uL1; the sequence is MANQKKVTNK…VKKTAKGKVI (245 aa). A unknown region spans residues 246 to 336; it reads ADDSAKGENK…DVKKAKTSKK (91 aa). The segment at 267–336 is disordered; sequence AQKKKPSKHP…DVKKAKTSKK (70 aa). Residues 286-305 show a composition bias toward basic residues; the sequence is KKKKVKKILKKAKPAKKAAV. A compositionally biased stretch (low complexity) spans 306–315; it reads AKKPVVVNKK.

It belongs to the universal ribosomal protein uL1 family. In terms of assembly, part of the 50S ribosomal subunit.

Its function is as follows. Binds directly to 23S rRNA. The L1 stalk is quite mobile in the ribosome, and is involved in E site tRNA release. In terms of biological role, protein L1 is also a translational repressor protein, it controls the translation of the L11 operon by binding to its mRNA. This chain is Large ribosomal subunit protein uL1, found in Malacoplasma penetrans (strain HF-2) (Mycoplasma penetrans).